The chain runs to 422 residues: UPF0761 membrane protein XAC0937 (422 aa).

The next 6 helical transmembrane spans lie at 45-65 (VFAL…FPAF), 102-122 (FTVA…HSIE), 151-171 (GTML…LPLF), 179-199 (LAEF…IVLI), 213-233 (ALPG…GFGF), and 247-267 (ALSA…SVLL).

This sequence belongs to the UPF0761 family.

It localises to the cell inner membrane. This chain is UPF0761 membrane protein XAC0937, found in Xanthomonas axonopodis pv. citri (strain 306).